The sequence spans 501 residues: Trans-cinnamate 4-monooxygenase (501 aa).

A helical membrane pass occupies residues 3-23 (LVLLEKALLGLFAAAVLAVAV). Residues 213–218 (RSRLSQ) and A302 contribute to the (E)-cinnamate site. Heme is bound at residue C443.

This sequence belongs to the cytochrome P450 family. Heme is required as a cofactor.

The protein resides in the membrane. It carries out the reaction (E)-cinnamate + reduced [NADPH--hemoprotein reductase] + O2 = (E)-4-coumarate + oxidized [NADPH--hemoprotein reductase] + H2O + H(+). It functions in the pathway phenylpropanoid metabolism; trans-4-coumarate biosynthesis; trans-4-coumarate from trans-cinnamate: step 1/1. Its function is as follows. Catalyzes the first oxidative step of the phenylpropanoid pathway in higher plants by transforming trans-cinnamate into p-coumarate. The compounds formed by this pathway are essential components for lignification, pollination, and defense against ultraviolet light, predators and pathogens. Can also use 2-naphthoic acid as substrate. The protein is Trans-cinnamate 4-monooxygenase of Sorghum bicolor (Sorghum).